The sequence spans 859 residues: MMMNSHFAGVGDNVDKEAYGHGIQVVDEDKVFNNNLSTYLNIEKVIPAGFNYHLISVFGSQSTGKSTLLNYLFGTQFGVMAEQERRQTTKGIWMSKNKRPEGGSAMAENILVMDVEGTDGRERGEDQDFERKSALFALATSEVLIVNIWEHQVGLYQGANMGLLKTVFEVNLQLFIKDSKTIPKSLLFFVIRDHLGTTPLKNLQNTLTQDLSKLWSTISKPKGLENSRIEEYFDFAFVALPHKILQPEKFEEAVTKLSLRFKEGYNDPKTSGLVDEAELPIFQPQYHRRIPADGFPAYAEGIWDQIVHNKDLDLPTQQELLAQFRCDEISREVLVLFDETIAPLEEKQAEDTRMGKPSVIAELGAAMNAARSTVFKDFETNASRYHKGVYKRKQAELEGKVDTRLKALSQKQLNAAHKSGVESFSDAVSAAVKAGQKKGASYDFAQIVDSEKKKAIAQFGEQAKSIVIEGASWSSFEHELKVYRKDLDDVSGRLRKDEMRRLATRIERWVRSRLDESVGLEFNKLGTGRGGSGAPEHGERPPSEKDLWDRVWAIFTETVSSAEKRFTDRAQSFDASPEEVDVGLWRLRRKSWGVLRAKIDEEVMEGNILLKLRENFEDKFRYDEQGVPRIWRPTDDIEGIYTKARESTITVIPLLARFKLSKTSAPPPLDAWIGDAPASVTPADEEDLTPIGGLDEEEGKSLEEEMTVLSDAKQADLLIRFKKTADGVYVEAKRSAIGGITQVPLYFYGLLVALGWNEIVAVLRNPVYFIFLILCAVGAYVTYTLNLWGPMIRMGNAASAQALEVGKERLREFLESSESGRQAMAMSGNQPRGESVRMNRLNGNGKKDEDAEVEDLDDI.

Over 1 to 742 the chain is Cytoplasmic; the sequence is MMMNSHFAGV…KRSAIGGITQ (742 aa). The region spanning 49–291 is the GB1/RHD3-type G domain; sequence GFNYHLISVF…FQPQYHRRIP (243 aa). A GTP-binding site is contributed by 59–66; the sequence is GSQSTGKS. Positions 476 to 496 form a coiled coil; sequence FEHELKVYRKDLDDVSGRLRK. Residues 525-544 are disordered; sequence LGTGRGGSGAPEHGERPPSE. A helical transmembrane segment spans residues 743 to 763; that stretch reads VPLYFYGLLVALGWNEIVAVL. Over 764–766 the chain is Lumenal; it reads RNP. A helical membrane pass occupies residues 767–787; sequence VYFIFLILCAVGAYVTYTLNL. The Cytoplasmic portion of the chain corresponds to 788 to 859; the sequence is WGPMIRMGNA…DAEVEDLDDI (72 aa). The segment at 816–859 is disordered; it reads SSESGRQAMAMSGNQPRGESVRMNRLNGNGKKDEDAEVEDLDDI. Over residues 850-859 the composition is skewed to acidic residues; the sequence is DAEVEDLDDI.

Belongs to the TRAFAC class dynamin-like GTPase superfamily. GB1/RHD3 GTPase family. RHD3 subfamily.

The protein localises to the endoplasmic reticulum membrane. Functionally, cooperates with the reticulon proteins and tubule-shaping DP1 family proteins to generate and maintain the structure of the tubular endoplasmic reticulum network. Has GTPase activity, which is required for its function in ER organization. This Phaeosphaeria nodorum (strain SN15 / ATCC MYA-4574 / FGSC 10173) (Glume blotch fungus) protein is Protein SEY1.